The chain runs to 89 residues: ATP synthase subunit H, mitochondrial (89 aa).

In terms of assembly, F-type ATP synthases have 2 components, the catalytic core F(1) and the membrane-embedded component F(0), linked together by a central stalk and a peripheral stalk. The central stalk, also called rotor shaft, is often seen as part of F(1). The peripheral stalk is seen as part of F(0). F(0) contains the membrane channel next to the rotor. F-type ATP synthases form dimers but each monomer functions independently in ATP generation. The dimer consists of 18 different polypeptides: ATP1 (subunit alpha, part of F(1), 3 molecules per monomer), ATP2 (subunit beta, part of F(1), 3 molecules per monomer), ATP3 (subunit gamma, part of the central stalk), ATP4 (subunit b, part of the peripheral stalk), ATP5/OSCP (subunit 5/OSCP, part of the peripheral stalk), ATP6 (subunit a, part of the peripheral stalk), ATP7 (subunit d, part of the peripheral stalk), ATP8 (subunit 8, part of the peripheral stalk), OLI1 (subunit c, part of the rotor, 10 molecules per monomer), ATP14 (subunit H, part of the peripheral stalk), ATP15 (subunit epsilon, part of the central stalk), ATP16 (subunit delta, part of the central stalk), ATP17 (subunit f, part of the peripheral stalk), ATP18 (subunit i/j, part of the peripheral stalk). Dimer-specific subunits are ATP19 (subunit k, at interface between monomers), ATP20 (subunit g, at interface between monomers), TIM11 (subunit e, at interface between monomers). Also contains subunit L.

It is found in the mitochondrion inner membrane. Mitochondrial membrane ATP synthase (F(1)F(0) ATP synthase or Complex V) produces ATP from ADP in the presence of a proton gradient across the membrane which is generated by electron transport complexes of the respiratory chain. F-type ATP synthases consist of two structural domains, F(1) - containing the extramembraneous catalytic core, and F(0) - containing the membrane proton channel, linked together by a central stalk and a peripheral stalk. During catalysis, ATP synthesis in the catalytic domain of F(1) is coupled via a rotary mechanism of the central stalk subunits to proton translocation. Part of the peripheral stalk. This Pichia angusta (Yeast) protein is ATP synthase subunit H, mitochondrial.